The sequence spans 197 residues: Alkyl hydroperoxide reductase C (197 aa).

The 162-residue stretch at 2 to 163 (VLVTQNAPNF…MIRMVDALDF (162 aa)) folds into the Thioredoxin domain. The active-site Cysteine sulfenic acid (-SOH) intermediate is the cysteine 50.

Belongs to the peroxiredoxin family. AhpC/Prx1 subfamily. In terms of assembly, homodimer; disulfide-linked, upon oxidation. 5 homodimers assemble to form a ring-like decamer.

Its subcellular location is the cytoplasm. It carries out the reaction a hydroperoxide + NADH + H(+) = an alcohol + NAD(+) + H2O. Thiol-specific peroxidase that catalyzes the reduction of hydrogen peroxide and organic hydroperoxides to water and alcohols, respectively. Plays a role in cell protection against oxidative stress by detoxifying peroxides. The chain is Alkyl hydroperoxide reductase C from Buchnera aphidicola subsp. Acyrthosiphon pisum (strain APS) (Acyrthosiphon pisum symbiotic bacterium).